The following is a 520-amino-acid chain: 1,4-alpha-glucan branching enzyme TTHA1902 (520 aa).

Glutamate 184 functions as the Nucleophile in the catalytic mechanism. 2 residues coordinate substrate: arginine 265 and glycine 282. Aspartate 353 functions as the Proton donor in the catalytic mechanism. Substrate is bound by residues tryptophan 404, aspartate 460, and glutamine 469.

Belongs to the glycosyl hydrolase 57 family.

It carries out the reaction Transfers a segment of a (1-&gt;4)-alpha-D-glucan chain to a primary hydroxy group in a similar glucan chain.. Its pathway is glycan biosynthesis; glycogen biosynthesis. In terms of biological role, catalyzes the formation of branch points in alpha-glucans by cleavage of an alpha-1,4 glycosidic bond and subsequent transfer of the cleaved-off oligosaccharide to a new alpha-1,6 position. The branch chain-length distribution of the reaction products shows degree of polymerization (DP) of 3 to 13, with two local maxima at DP 7 and DP 11. Exhibits an alpha-retaining catalytic mechanism. Is involved in glycogen biosynthesis. Shows a secondary activity, i.e. the hydrolysis of the substrate, being 4% of the total activity. Can use amylose as substrate but not alpha-1,4-linked oligosaccharides of 2-7 glucose residues, beta-cyclodextrin, 6-O-glucosyl-beta-cyclodextrin and 6-O-maltosyl-beta-cyclodextrin. Is not able to branch amylopectin further, it only hydrolyzes amylopectin. Thus, displays preference for linear and long substrates (amylose) over branched structures (amylopectin). The chain is 1,4-alpha-glucan branching enzyme TTHA1902 from Thermus thermophilus (strain ATCC 27634 / DSM 579 / HB8).